A 150-amino-acid polypeptide reads, in one-letter code: Ribonuclease K6 (150 aa).

A signal peptide spans 1 to 23 (MVLCFPLLLLLLVLWGPVCPLHA). The active-site Proton acceptor is histidine 38. 4 disulfides stabilise this stretch: cysteine 46/cysteine 104, cysteine 60/cysteine 114, cysteine 78/cysteine 129, and cysteine 85/cysteine 92. Residue asparagine 55 is glycosylated (N-linked (GlcNAc...) asparagine). Substrate-binding positions include 61–65 (KHQNT) and lysine 86. Asparagine 100 is a glycosylation site (N-linked (GlcNAc...) asparagine). Substrate is bound at residue arginine 105. Histidine 145 serves as the catalytic Proton donor.

It belongs to the pancreatic ribonuclease family. Interacts (via N-terminus) with bacterial lipopolysaccharide (LPS).

Its subcellular location is the secreted. The protein localises to the lysosome. It is found in the cytoplasmic granule. In terms of biological role, ribonuclease which shows a preference for the pyrimidines uridine and cytosine. Has potent antibacterial activity against a range of Gram-positive and Gram-negative bacteria, including P.aeruginosa, A.baumanii, M.luteus, S.aureus, E.faecalis, E.faecium, S.saprophyticus and E.coli. Causes loss of bacterial membrane integrity, and also promotes agglutination of Gram-negative bacteria. Probably contributes to urinary tract sterility. Bactericidal activity is independent of RNase activity. The polypeptide is Ribonuclease K6 (RNASE6) (Pongo pygmaeus (Bornean orangutan)).